Here is a 465-residue protein sequence, read N- to C-terminus: Pancreatic triacylglycerol lipase (465 aa).

Positions 1-16 are cleaved as a signal peptide; it reads MLMLWTFAVLLGAVAG. Cystine bridges form between Cys20/Cys26 and Cys107/Cys118. Ser169 (nucleophile) is an active-site residue. Catalysis depends on Asp193, which acts as the Charge relay system. Residues Glu204, Arg207, Asp209, and Asp212 each contribute to the Ca(2+) site. Residues Cys254 and Cys278 are joined by a disulfide bond. His280 functions as the Charge relay system in the catalytic mechanism. Cystine bridges form between Cys302–Cys313, Cys316–Cys321, and Cys449–Cys465. In terms of domain architecture, PLAT spans 355-465; that stretch reads WRYQVTVTLS…EDVLLTLSPC (111 aa).

Belongs to the AB hydrolase superfamily. Lipase family. In terms of assembly, forms a 1:1 stoichiometric complex with (pro)colipase/CLPS. Pancreas.

The protein localises to the secreted. It carries out the reaction a triacylglycerol + H2O = a diacylglycerol + a fatty acid + H(+). The enzyme catalyses 1,2,3-tri-(9Z-octadecenoyl)-glycerol + H2O = di-(9Z)-octadecenoylglycerol + (9Z)-octadecenoate + H(+). The catalysed reaction is 1,2,3-tributanoylglycerol + H2O = dibutanoylglycerol + butanoate + H(+). It catalyses the reaction all-trans-retinyl hexadecanoate + H2O = all-trans-retinol + hexadecanoate + H(+). It carries out the reaction 1,2-di-(9Z-octadecenoyl)-glycerol + H2O = (9Z-octadecenoyl)-glycerol + (9Z)-octadecenoate + H(+). Inhibited by bile salts, is reactivated by (pro)colipase/CLPS. Its function is as follows. Plays an important role in fat metabolism. It preferentially splits the esters of long-chain fatty acids at positions 1 and 3, producing mainly 2-monoacylglycerol and free fatty acids, and shows considerably higher activity against insoluble emulsified substrates than against soluble ones. This is Pancreatic triacylglycerol lipase from Mus musculus (Mouse).